The sequence spans 459 residues: NADH-ubiquinone oxidoreductase chain 4 (459 aa).

The next 13 membrane-spanning stretches (helical) occupy residues histidine 22–leucine 42, proline 61–serine 81, arginine 94–alanine 113, leucine 114–isoleucine 134, alanine 146–threonine 166, tryptophan 197–leucine 217, proline 225–isoleucine 245, leucine 258–leucine 278, serine 285–leucine 304, leucine 308–leucine 330, leucine 352–proline 372, leucine 380–glycine 400, and leucine 437–threonine 457.

It belongs to the complex I subunit 4 family.

The protein localises to the mitochondrion membrane. The catalysed reaction is a ubiquinone + NADH + 5 H(+)(in) = a ubiquinol + NAD(+) + 4 H(+)(out). Functionally, core subunit of the mitochondrial membrane respiratory chain NADH dehydrogenase (Complex I) that is believed to belong to the minimal assembly required for catalysis. Complex I functions in the transfer of electrons from NADH to the respiratory chain. The immediate electron acceptor for the enzyme is believed to be ubiquinone. In Pelomedusa subrufa (African side-necked turtle), this protein is NADH-ubiquinone oxidoreductase chain 4 (MT-ND4).